A 591-amino-acid chain; its full sequence is CDK5RAP3 protein homolog (591 aa).

A compositionally biased stretch (low complexity) spans 232–250 (RAGAPSSAKGPASSASAPP). 2 disordered regions span residues 232–252 (RAGA…PPAL) and 269–303 (TAPP…DAGG). Positions 279–303 (AGAGASGQGGGIEIDWGDSGGDAGG) are enriched in gly residues. Short sequence motifs (shuffled ATG8-binding motif) lie at residues 311–314 (IDWD), 334–337 (INWD), and 369–372 (IDWD). Residues 386 to 401 (NNRAGDVAEGEAAASL) are compositionally biased toward low complexity. Residues 386–416 (NNRAGDVAEGEAAASLSGGGGGGASSGDPDD) form a disordered region.

Belongs to the CDK5RAP3 family. Substrate adapter component of the UFM1 ribosome E3 ligase (UREL) complex. Interacts with ATG8 family proteins.

Its function is as follows. Substrate adapter of E3 ligase complexes mediating ufmylation, the covalent attachment of the ubiquitin-like modifier UFM1 to substrate proteins, and which is involved in various processes, such as ribosome recycling and reticulophagy (also called ER-phagy). The sequence is that of CDK5RAP3 protein homolog from Chlamydomonas reinhardtii (Chlamydomonas smithii).